The following is a 451-amino-acid chain: Gamma-aminobutyric acid receptor subunit alpha-2 (451 aa).

Positions 1 to 28 (MKTKLSTCNVWSLLLVLLVWDPVRLVLA) are cleaved as a signal peptide. Over 29–249 (NIQEDEAKNN…MTAHFHLKRK (221 aa)) the chain is Extracellular. Asn-38 is a glycosylation site (N-linked (GlcNAc...) asparagine). Arg-94 provides a ligand contact to 4-aminobutanoate. N-linked (GlcNAc...) asparagine glycosylation occurs at Asn-138. Residue Thr-157 coordinates 4-aminobutanoate. Cys-166 and Cys-180 are joined by a disulfide. The chain crosses the membrane as a helical span at residues 250-270 (IGYFVIQTYLPCIMTVILSQV). Over 271–280 (SFWLNRESVP) the chain is Cytoplasmic. The chain crosses the membrane as a helical span at residues 281 to 300 (ARTVFGVTTVLTMTTLSISA). Over 301–311 (RNSLPKVAYAT) the chain is Extracellular. The chain crosses the membrane as a helical span at residues 312-332 (AMDWFIAVCYAFVFSALIEFA). The Cytoplasmic segment spans residues 333–420 (TVNYFTKRGW…FNSVSKIDRM (88 aa)). The segment at 389 to 408 (KSATTPEPNKKPENKPAEAK) is disordered. Positions 396 to 408 (PNKKPENKPAEAK) are enriched in basic and acidic residues. The helical transmembrane segment at 421-441 (SRIVFPVLFGTFNLVYWATYL) threads the bilayer. At 442–451 (NREPVLGVSP) the chain is on the extracellular side.

The protein belongs to the ligand-gated ion channel (TC 1.A.9) family. Gamma-aminobutyric acid receptor (TC 1.A.9.5) subfamily. GABRA2 sub-subfamily. Heteropentamer, formed by a combination of alpha (GABRA1-6), beta (GABRB1-3), gamma (GABRG1-3), delta (GABRD), epsilon (GABRE), rho (GABRR1-3), pi (GABRP) and theta (GABRQ) subunits, each subunit exhibiting distinct physiological and pharmacological properties. Interacts with UBQLN1. Interacts with KIF21B. Interacts with LHFPL4. Interacts with SHISA7; interaction leads to the regulation of GABA(A) receptor trafficking, channel deactivation kinetics and pharmacology. In terms of processing, glycosylated.

It is found in the postsynaptic cell membrane. It localises to the cell membrane. The protein localises to the cytoplasmic vesicle membrane. The protein resides in the cell projection. Its subcellular location is the dendrite. The catalysed reaction is chloride(in) = chloride(out). With respect to regulation, activated by pentobarbital. Inhibited by the antagonist bicuculline. Alpha subunit of the heteropentameric ligand-gated chloride channel gated by gamma-aminobutyric acid (GABA), a major inhibitory neurotransmitter in the brain. GABA-gated chloride channels, also named GABA(A) receptors (GABAAR), consist of five subunits arranged around a central pore and contain GABA active binding site(s) located at the alpha and beta subunit interface(s). When activated by GABA, GABAARs selectively allow the flow of chloride anions across the cell membrane down their electrochemical gradient. Chloride influx into the postsynaptic neuron following GABAAR opening decreases the neuron ability to generate a new action potential, thereby reducing nerve transmission. The alpha-2 subunit exhibits synaptogenic activity together with beta-2 and very little to no activity together with beta-3, the gamma-2 subunit being necessary but not sufficient to induce rapid synaptic contacts formation. This is Gamma-aminobutyric acid receptor subunit alpha-2 from Mus musculus (Mouse).